Consider the following 89-residue polypeptide: MGGISIWQLLIIALIVVLLFGTKKLRSLGGDLGGAVKGFKNAMSSEEEKKALEENATDKPAADTAKVTETAKVAETAEKKAESKGKEQA.

Residues 1–21 (MGGISIWQLLIIALIVVLLFG) form a helical membrane-spanning segment. Residues 47–61 (EEKKALEENATDKPA) are compositionally biased toward basic and acidic residues. Residues 47–89 (EEKKALEENATDKPAADTAKVTETAKVAETAEKKAESKGKEQA) form a disordered region. Residues 62-74 (ADTAKVTETAKVA) show a composition bias toward low complexity. Over residues 75–89 (ETAEKKAESKGKEQA) the composition is skewed to basic and acidic residues.

This sequence belongs to the TatA/E family. In terms of assembly, the Tat system comprises two distinct complexes: a TatABC complex, containing multiple copies of TatA, TatB and TatC subunits, and a separate TatA complex, containing only TatA subunits. Substrates initially bind to the TatABC complex, which probably triggers association of the separate TatA complex to form the active translocon.

The protein resides in the cell inner membrane. In terms of biological role, part of the twin-arginine translocation (Tat) system that transports large folded proteins containing a characteristic twin-arginine motif in their signal peptide across membranes. TatA could form the protein-conducting channel of the Tat system. The chain is Sec-independent protein translocase protein TatA from Shewanella pealeana (strain ATCC 700345 / ANG-SQ1).